An 860-amino-acid chain; its full sequence is Glucans biosynthesis glucosyltransferase H (860 aa).

The next 6 helical transmembrane spans lie at 146-166 (ILLI…KGIL), 200-220 (ILLL…TALM), 519-539 (VFLT…FLVL), 576-596 (LFST…ILIW), 610-630 (TVSM…RMLF), and 686-706 (FLWW…VSVI).

It belongs to the glycosyltransferase 2 family. OpgH subfamily.

It is found in the cell inner membrane. It participates in glycan metabolism; osmoregulated periplasmic glucan (OPG) biosynthesis. Involved in the biosynthesis of osmoregulated periplasmic glucans (OPGs). In Pseudomonas syringae pv. syringae (strain B728a), this protein is Glucans biosynthesis glucosyltransferase H.